A 1907-amino-acid chain; its full sequence is Receptor-type tyrosine-protein phosphatase S (1907 aa).

An N-terminal signal peptide occupies residues 1–29 (MAPTWRPSVVSVVGPVGLFLVLLARGCLA). Residues 30-1257 (EEPPRFIREP…PQPIVDGEEG (1228 aa)) are Extracellular-facing. 3 consecutive Ig-like C2-type domains span residues 33 to 123 (PRFI…AKLT), 135 to 224 (PNID…ANLY), and 232 to 314 (PRFS…AQIT). 2 disulfides stabilise this stretch: Cys54–Cys107 and Cys156–Cys207. Positions 68-72 (KKGKK) are important for binding to glycosaminoglycan chains. N-linked (GlcNAc...) asparagine glycans are attached at residues Asn250 and Asn295. The cysteines at positions 253 and 298 are disulfide-linked. 8 Fibronectin type-III domains span residues 321-411 (APGT…TGEQ), 416-510 (APRN…TQQG), 514-603 (QPMN…TLQA), 608-705 (PPQD…TDED), 710-809 (PPRK…TKGA), 810-906 (VLGR…APRG), 907-1008 (FPQI…LARD), and 1011-1095 (SPKN…TAFN). The span at 691–700 (PGPESSPVVV) shows a compositional bias: low complexity. Positions 691 to 711 (PGPESSPVVVRTDEDVPSAPP) are disordered. N-linked (GlcNAc...) asparagine glycosylation is present at Asn720. A glycan (N-linked (GlcNAc...) asparagine) is linked at Asn916. Residues 1258–1278 (LIWVIGPVLAVVFIICIVIAI) form a helical membrane-spanning segment. Topologically, residues 1279–1907 (LLYKNKPDSK…YLGSFDHYAT (629 aa)) are cytoplasmic. The segment covering 1286–1296 (DSKRKDSEPRT) has biased composition (basic and acidic residues). The interval 1286–1313 (DSKRKDSEPRTKCLLNNADLAPHHPKDP) is disordered. Tyrosine-protein phosphatase domains are found at residues 1352–1607 (LSQE…LLEA) and 1639–1898 (MELE…ALEY). Substrate-binding positions include Asp1516, 1548 to 1554 (CSAGVGR), and Gln1592. Residue Cys1548 is the Phosphocysteine intermediate of the active site. Cys1839 serves as the catalytic Phosphocysteine intermediate.

Belongs to the protein-tyrosine phosphatase family. Receptor class 2A subfamily. As to quaternary structure, binding to large heparan sulfate proteoglycan structures promotes oligomerization. Binding to chondroitin sulfate proteoglycan does not lead to oligomerization. Interacts (via Ig-like domains) with NTRK1 and NTRK3, but does not form detectable complexes with NTRK2. Interacts with PPFIA1, PPFIA2 and PPFIA3. Post-translationally, a cleavage occurs, separating the extracellular domain from the transmembrane segment. This process called 'ectodomain shedding' is thought to be involved in receptor desensitization, signal transduction and/or membrane localization. As to expression, detected in brain neocortex (at protein level). Detected in heart, testis and liver. Detected at lower levels in skeletal muscle, brain, spleen and kidney.

It localises to the cell membrane. The protein resides in the cell projection. Its subcellular location is the axon. It is found in the perikaryon. The protein localises to the cytoplasmic vesicle. It localises to the secretory vesicle. The protein resides in the synaptic vesicle membrane. Its subcellular location is the synapse. It is found in the synaptosome. The protein localises to the postsynaptic density. It localises to the neuron projection. The protein resides in the growth cone. It carries out the reaction O-phospho-L-tyrosyl-[protein] + H2O = L-tyrosyl-[protein] + phosphate. Its function is as follows. Cell surface receptor that binds to glycosaminoglycans, including chondroitin sulfate proteoglycans and heparan sulfate proteoglycans. Binding to chondroitin sulfate and heparan sulfate proteoglycans has opposite effects on PTPRS oligomerization and regulation of neurite outgrowth. Contributes to the inhibition of neurite and axonal outgrowth by chondroitin sulfate proteoglycans, also after nerve transection. Plays a role in stimulating neurite outgrowth in response to the heparan sulfate proteoglycan GPC2. Required for normal brain development, especially for normal development of the pituitary gland and the olfactory bulb. Functions as tyrosine phosphatase. Mediates dephosphorylation of NTRK1, NTRK2 and NTRK3. Plays a role in down-regulation of signaling cascades that lead to the activation of Akt and MAP kinases. Down-regulates TLR9-mediated activation of NF-kappa-B, as well as production of TNF, interferon alpha and interferon beta. This Rattus norvegicus (Rat) protein is Receptor-type tyrosine-protein phosphatase S (Ptprs).